A 909-amino-acid chain; its full sequence is Hexon protein (909 aa).

Tyr-897 is subject to Phosphotyrosine; by host.

This sequence belongs to the adenoviridae hexon protein family. Homotrimer. Interacts with the capsid vertex protein; this interaction binds the peripentonal hexons to the neighboring penton base. Interacts with the hexon-linking protein; this interaction tethers the hexons surrounding the penton to those situated in the central plate of the facet. Interacts with the hexon-interlacing protein; this interaction lashes the hexons together. Interacts with host dyneins DYNC1LI1 and DYNC1I2; this interaction might be involved in intracellular microtubule-dependent transport of incoming viral capsid. Interacts with the shutoff protein; this interaction allows folding and formation of hexons trimers. Interacts with pre-protein VI; this interaction probably allows nuclear import of hexon trimers and possibly pre-capsid assembly.

The protein localises to the virion. Its subcellular location is the host nucleus. Major capsid protein that self-associates to form 240 hexon trimers, each in the shape of a hexagon, building most of the pseudo T=25 capsid. Assembled into trimeric units with the help of the chaperone shutoff protein. Transported by pre-protein VI to the nucleus where it associates with other structural proteins to form an empty capsid. Might be involved, through its interaction with host dyneins, in the intracellular microtubule-dependent transport of incoming viral capsid to the nucleus. This Pantherophis guttatus (Corn snake) protein is Hexon protein.